The sequence spans 1230 residues: ATP-dependent helicase/nuclease subunit A (1230 aa).

The region spanning 3 to 473 is the UvrD-like helicase ATP-binding domain; sequence TKFTKNQQRA…IDLADNFRSQ (471 aa). 24–31 is an ATP binding site; it reads ASAGSGKT. In terms of domain architecture, UvrD-like helicase C-terminal spans 500–782; the sequence is EAKLVPKAAY…RIMTIHASKG (283 aa).

The protein belongs to the helicase family. AddA subfamily. Heterodimer of AddA and AddB/RexB. The cofactor is Mg(2+).

It catalyses the reaction Couples ATP hydrolysis with the unwinding of duplex DNA by translocating in the 3'-5' direction.. The enzyme catalyses ATP + H2O = ADP + phosphate + H(+). Functionally, the heterodimer acts as both an ATP-dependent DNA helicase and an ATP-dependent, dual-direction single-stranded exonuclease. Recognizes the chi site generating a DNA molecule suitable for the initiation of homologous recombination. The AddA nuclease domain is required for chi fragment generation; this subunit has the helicase and 3' -&gt; 5' nuclease activities. The protein is ATP-dependent helicase/nuclease subunit A of Leuconostoc mesenteroides subsp. mesenteroides (strain ATCC 8293 / DSM 20343 / BCRC 11652 / CCM 1803 / JCM 6124 / NCDO 523 / NBRC 100496 / NCIMB 8023 / NCTC 12954 / NRRL B-1118 / 37Y).